The following is a 572-amino-acid chain: Flagellin A (572 aa).

This sequence belongs to the bacterial flagellin family. As to quaternary structure, heteromer of FlaA and FlaB. Interacts with FliW.

It localises to the secreted. Its subcellular location is the bacterial flagellum. In terms of biological role, flagellin is the subunit protein which polymerizes to form the filaments of bacterial flagella. FlaA binds to flagellar assembly factor FliW protein, preventing FliW from binding to CsrA, so that CsrA can then bind flaA mRNA and represses its translation. In Campylobacter jejuni subsp. jejuni serotype O:2 (strain ATCC 700819 / NCTC 11168), this protein is Flagellin A (flaA).